We begin with the raw amino-acid sequence, 396 residues long: S-adenosylmethionine synthase (396 aa).

Residue histidine 16 participates in ATP binding. Residue aspartate 18 participates in Mg(2+) binding. Glutamate 44 provides a ligand contact to K(+). L-methionine contacts are provided by glutamate 57 and glutamine 100. The interval 100-110 (QSVDINQGVDR) is flexible loop. Residues 165–167 (DAK), aspartate 240, 246–247 (RK), alanine 263, and lysine 267 contribute to the ATP site. Residue aspartate 240 participates in L-methionine binding. Residue lysine 271 coordinates L-methionine.

Belongs to the AdoMet synthase family. As to quaternary structure, homotetramer; dimer of dimers. It depends on Mg(2+) as a cofactor. The cofactor is K(+).

Its subcellular location is the cytoplasm. It carries out the reaction L-methionine + ATP + H2O = S-adenosyl-L-methionine + phosphate + diphosphate. Its pathway is amino-acid biosynthesis; S-adenosyl-L-methionine biosynthesis; S-adenosyl-L-methionine from L-methionine: step 1/1. In terms of biological role, catalyzes the formation of S-adenosylmethionine (AdoMet) from methionine and ATP. The overall synthetic reaction is composed of two sequential steps, AdoMet formation and the subsequent tripolyphosphate hydrolysis which occurs prior to release of AdoMet from the enzyme. This Pseudomonas aeruginosa (strain UCBPP-PA14) protein is S-adenosylmethionine synthase.